The following is a 123-amino-acid chain: Large ribosomal subunit protein bL12 (123 aa).

It belongs to the bacterial ribosomal protein bL12 family. In terms of assembly, homodimer. Part of the ribosomal stalk of the 50S ribosomal subunit. Forms a multimeric L10(L12)X complex, where L10 forms an elongated spine to which 2 to 4 L12 dimers bind in a sequential fashion. Binds GTP-bound translation factors.

In terms of biological role, forms part of the ribosomal stalk which helps the ribosome interact with GTP-bound translation factors. Is thus essential for accurate translation. The chain is Large ribosomal subunit protein bL12 from Acholeplasma laidlawii (strain PG-8A).